Reading from the N-terminus, the 289-residue chain is MGLGLWIRTGVLMAFLTALLVGIGYLIGGRGGMIIAFTIALFMNLISYWFSDSIVLSWYNARIVSEEEAPELHYIVEKLARQAGIPKPKVAIVPTMVPNAFATGRGPGNAVVAVTEGLLHLLNRDELEGVIAHEISHIKNRDTLIQTLAAVLAGAIMILVDFARWSLWFGAYDDERDSGSVIGLILAIVLAPLAATLIQLAISRSREYLADETGARISGKPHALASALMKIEEAIRYRPLRRGNPATAHMFIVNPFRGVDFAELFSTHPPTEKRIERLRKIALEMGIVF.

The next 2 membrane-spanning stretches (helical) occupy residues 9 to 29 (TGVLMAFLTALLVGIGYLIGG) and 31 to 51 (GGMIIAFTIALFMNLISYWFS). His-133 provides a ligand contact to Zn(2+). The active site involves Glu-134. His-137 lines the Zn(2+) pocket. The next 2 membrane-spanning stretches (helical) occupy residues 143–163 (TLIQTLAAVLAGAIMILVDFA) and 182–202 (IGLILAIVLAPLAATLIQLAI). Glu-207 is a Zn(2+) binding site.

This sequence belongs to the peptidase M48B family. Requires Zn(2+) as cofactor.

The protein localises to the cell membrane. The sequence is that of Protease HtpX homolog from Pyrococcus abyssi (strain GE5 / Orsay).